The following is a 907-amino-acid chain: MKGSNRNKDHSTEGEGDGKRPKRKCLQWHPLLAKKLLDFSEEEEEDEEEEDIDKVQLLEADGLEQDVAETEDDESPEQRARRPMNAFLLFCKRHRSLVRQEHPRLDNRGATKILADWWAVLDPKEKQKYTDMAKEYKDAFMKANPGYRWCPTTNKPVKSPTPTVNPRKKLWAFPPDSSRDLPTPKKAKTEVPQLNFGMADPTQMGGLSMLLLAGEHALGTPEASSGTCRPDISESPELRQKSPLFQFAEISSRTSHPDAPSKQCQASALFQFAEISSSTSQLGGTEPVKRCGNSALFQLAEMCLASEGVKMEDTKLIKSKESDGGRIEEIEKGKEERGTEVEKTTETSFQKEAEFGKSAKGNVRESKDLRDIEQLQMDNVMAIKVEDPKEIRKEPEDDQKYSHFPDFSYSASSKIIISGVPSRKDHMCHPHGIMIIEDPTTLNKPEKIKKKKKKNKLDRHGNDKSTPKKTCKKRQSSESDIESVMYTIEAVAKGDWGVDKLGETPRKKVRPSSSGKGGILDAKPPKKKVKSKEKKVSKEKCSDITKESRPPDFLSISASKSVPGEVPEGIKAEPLTPTEDALPPSLPGQAKPEDSDCHRKTETCGSRKSERSCKGALYKTLVSEGMLTSLRANVDRGKRSSGKGNSSDHEGCWSEESWTFNQSGTSGSKKFKKKLREDSFLGSAKLDEEFEKKFNSLPQYSPITFDRKCVSTPRKKKKTGNMSSESTKTSKGSGDKWSHKQFFLDAIHPTEAIFSEDKSTTEPAFKVKNALSIPNTPEPTTMQEPLVGSQKRKARKTKITHLVRTADGRVSPAGGTLDDKPKEQLQRSLPKVPGTYCGDNCSHSTVEEPRSSTPDMPAVSAFFSLAALAEVAAMENVHRGQRSTPLTHDGQPKEMPQAPVLISCADQ.

Positions 1-19 are enriched in basic and acidic residues; that stretch reads MKGSNRNKDHSTEGEGDGK. Disordered stretches follow at residues 1-24, 37-80, 152-185, and 220-242; these read MKGS…PKRK, LDFS…EQRA, TTNK…PTPK, and TPEA…RQKS. Acidic residues-rich tracts occupy residues 39–52 and 61–75; these read FSEE…EEDI and DGLE…DDES. Positions 80 to 148 form a DNA-binding region, HMG box; that stretch reads ARRPMNAFLL…AFMKANPGYR (69 aa). Residues 152–164 show a composition bias toward polar residues; the sequence is TTNKPVKSPTPTV. Serine 242 is modified (phosphoserine). Residue lysine 384 forms a Glycyl lysine isopeptide (Lys-Gly) (interchain with G-Cter in SUMO2) linkage. 3 disordered regions span residues 435–483, 495–612, and 628–672; these read IIED…DIES, DWGV…SERS, and TSLR…KKFK. Positions 447–457 are enriched in basic residues; sequence KIKKKKKKNKL. Residues serine 476 and serine 483 each carry the phosphoserine modification. 2 stretches are compositionally biased toward basic and acidic residues: residues 496–506 and 534–550; these read WGVDKLGETPR and KKVS…ESRP. Lysine 571 is covalently cross-linked (Glycyl lysine isopeptide (Lys-Gly) (interchain with G-Cter in SUMO2)). The segment covering 591 to 612 has biased composition (basic and acidic residues); the sequence is KPEDSDCHRKTETCGSRKSERS. The segment covering 656-668 has biased composition (polar residues); the sequence is ESWTFNQSGTSGS. Lysine 693 participates in a covalent cross-link: Glycyl lysine isopeptide (Lys-Gly) (interchain with G-Cter in SUMO2). A Phosphoserine modification is found at serine 701. 3 disordered regions span residues 708–736, 769–854, and 877–907; these read KCVS…SGDK, NALS…SSTP, and VHRG…CADQ. Residues 723-732 are compositionally biased toward low complexity; that stretch reads SSESTKTSKG. A compositionally biased stretch (polar residues) spans 772–783; that stretch reads SIPNTPEPTTMQ. Residue serine 789 is modified to Phosphoserine. Positions 790 to 801 are enriched in basic residues; sequence QKRKARKTKITH. At serine 811 the chain carries Phosphoserine.

It localises to the nucleus. Its function is as follows. Transcription factor that is necessary for cell cycle progression from G1 to S phase. The chain is HMG box transcription factor BBX (Bbx) from Mus musculus (Mouse).